Here is a 131-residue protein sequence, read N- to C-terminus: Large ribosomal subunit protein mL60 (131 aa).

Residues 1–12 constitute a mitochondrion transit peptide; the sequence is MFGPFKLTSPVA.

This sequence belongs to the mitochondrion-specific ribosomal protein mL60 family. As to quaternary structure, component of the mitochondrial large ribosomal subunit (mt-LSU). Mature yeast 74S mitochondrial ribosomes consist of a small (37S) and a large (54S) subunit. The 37S small subunit contains a 15S ribosomal RNA (15S mt-rRNA) and 34 different proteins. The 54S large subunit contains a 21S rRNA (21S mt-rRNA) and 46 different proteins.

Its subcellular location is the mitochondrion. Functionally, component of the mitochondrial ribosome (mitoribosome), a dedicated translation machinery responsible for the synthesis of mitochondrial genome-encoded proteins, including at least some of the essential transmembrane subunits of the mitochondrial respiratory chain. The mitoribosomes are attached to the mitochondrial inner membrane and translation products are cotranslationally integrated into the membrane. The protein is Large ribosomal subunit protein mL60 (MRPL31) of Saccharomyces cerevisiae (strain ATCC 204508 / S288c) (Baker's yeast).